Consider the following 258-residue polypeptide: 3-deoxy-manno-octulosonate cytidylyltransferase (258 aa).

Belongs to the KdsB family.

Its subcellular location is the cytoplasm. The enzyme catalyses 3-deoxy-alpha-D-manno-oct-2-ulosonate + CTP = CMP-3-deoxy-beta-D-manno-octulosonate + diphosphate. The protein operates within nucleotide-sugar biosynthesis; CMP-3-deoxy-D-manno-octulosonate biosynthesis; CMP-3-deoxy-D-manno-octulosonate from 3-deoxy-D-manno-octulosonate and CTP: step 1/1. Its pathway is bacterial outer membrane biogenesis; lipopolysaccharide biosynthesis. Functionally, activates KDO (a required 8-carbon sugar) for incorporation into bacterial lipopolysaccharide in Gram-negative bacteria. The polypeptide is 3-deoxy-manno-octulosonate cytidylyltransferase (Parvibaculum lavamentivorans (strain DS-1 / DSM 13023 / NCIMB 13966)).